The following is a 652-amino-acid chain: Na(+)/H(+) antiporter NhaA 1 (652 aa).

The tract at residues 1 to 427 (MTGELPRGRR…VGASLTTWLV (427 aa)) is na(+)/H(+) antiporter NhaA. 11 consecutive transmembrane segments (helical) span residues 27–47 (AFLHTETGSARVLLAAAVVAL), 78–98 (LRYWVNSGLMTFFFLVIGLEV), 114–134 (TLPLLAGIGGILVPIAIYLAF), 142–162 (VGWGVVMATDTALALGMLAVL), 173–193 (FLLTVAVVDDLIVIAVLAIAY), 200–220 (TALFVAAGIFALVLLIRAAGG), 227–247 (LLLGVAAWLAVSESGVDPVVV), 312–332 (LIVPLFALANVGVVVDGELLA), 343–363 (VLFAYVVGKPAGIVIASMLVA), 376–396 (WAAIIGVGTVSGIGFTIALLI), and 411–431 (IGILVATVGASLTTWLVFRLA). Residues 428–623 (FRLAARLPPA…LSAAVTSAFA (196 aa)) form the Thioredoxin domain. Residues 626 to 652 (RLRPRDDREPDRRREVGSEQPDEEPGT) form a disordered region. Residues 628–642 (RPRDDREPDRRREVG) show a composition bias toward basic and acidic residues.

It in the N-terminal section; belongs to the NhaA Na(+)/H(+) (TC 2.A.33) antiporter family.

The protein resides in the cell membrane. The catalysed reaction is Na(+)(in) + 2 H(+)(out) = Na(+)(out) + 2 H(+)(in). In terms of biological role, na(+)/H(+) antiporter that extrudes sodium in exchange for external protons. This is Na(+)/H(+) antiporter NhaA 1 from Salinispora arenicola (strain CNS-205).